Reading from the N-terminus, the 62-residue chain is Zinc finger-containing protein P28b (62 aa).

The RING-type; degenerate zinc-finger motif lies at M1–R46.

This is Zinc finger-containing protein P28b from Vaccinia virus (strain Western Reserve) (VACV).